A 327-amino-acid polypeptide reads, in one-letter code: MYQSLMTVRETQIAIKEVKTFFEDQLAKRLELFRVSAPLFVTKKSGLNDHLNGVERPIEFDMLHSGEELEIVHSLAKWKRFALHEYGYEAGEGLYTNMNAIRRDEELDATHSIYVDQWDWEKIVQKEWRTVEYLQKTVQTIYGIFKDLEDHLFEKYPFLGKYLPEEIVFVTSQELEDKYPELTPKDREHAIAKEHGAVFIIGIGDALRSGEKHDGRAADYDDWKLNGDILFWHPVLQSSFELSSMGIRVDSKSLDEQLTKTGEDFKREYDFHKGILEDVLPLTIGGGIGQSRMCMYFLRKAHIGEVQSSVWPDDLREACKKENIHLF.

Belongs to the class-II aminoacyl-tRNA synthetase family. AsnA subfamily.

The protein localises to the cytoplasm. It carries out the reaction L-aspartate + NH4(+) + ATP = L-asparagine + AMP + diphosphate + H(+). Its pathway is amino-acid biosynthesis; L-asparagine biosynthesis; L-asparagine from L-aspartate (ammonia route): step 1/1. In Bacillus cereus (strain B4264), this protein is Aspartate--ammonia ligase.